We begin with the raw amino-acid sequence, 806 residues long: MRAAWGSVWCLCLAAAVGALPAARRRGAERSGGQAAEYLRSETAFLEELVFGSGDTIELSCNTQSSSVSVFWFKDGIGIAPSNRTHIGQKLLKIINVSYDDSGLYSCKPRHSNEVLGNFTVRVTDSPSSGDDEDDDDESEDTGVPFWTRPDKMEKKLLAVPAANTVRFRCPAGGNPTPTIYWLKNGKEFKGEHRIGGIKLRHQQWSLVMESVVPSDRGNYTCVVENKYGNIRHTYQLDVLERSPHRPILQAGLPANQTVVVGSNVEFHCKVYSDAQPHIQWLKHVEVNGSKYGPDGTPYVTVLKTAGVNTTDKELEILYLRNVTFEDAGEYTCLAGNSIGFSHHSAWLTVLPAEELMEMDDSGSVYAGILSYGTGLVLFILVLVIVIICRMKMPNKKAMNTTTVQKVSKFPLKRQQVSLESNSSMNSNTPLVRITRLSSSDGPMLANVSELELPPDPKWELARSRLTLGKPLGEGCFGQVVMAEAIGIDKDKPNKAITVAVKMLKDDATDKDLSDLVSEMEMMKMIGKHKNIINLLGACTQDGPLYVLVEYASKGNLREYLRARRPPGMDYSFDTCKLPEEQLTFKDLVSCAYQVARGMEYLASQKCIHRDLAARNVLVTEDNVMKIADFGLARDVHNIDYYKKTTNGRLPVKWMAPEALFDRVYTHQSDVWSFGVLLWEIFTLGGSPYPGIPVEELFKLLKEGHRMDKPANCTHDLYMIMRECWHAVPSQRPTFKQLVEDLDRVLTMTSTDEYLDLSVPFEQYSPAGQDTHSTCSSGDDSVFAHDLLPDEPCLPKHVPCNGVIRT.

The N-terminal stretch at 1–19 (MRAAWGSVWCLCLAAAVGA) is a signal peptide. Residues 20–364 (LPAARRRGAE…ELMEMDDSGS (345 aa)) are Extracellular-facing. Residues 24–124 (RRRGAERSGG…VLGNFTVRVT (101 aa)) enclose the Ig-like C2-type 1 domain. Cys61 and Cys107 are joined by a disulfide. Residues Asn83, Asn96, and Asn118 are each glycosylated (N-linked (GlcNAc...) asparagine). The tract at residues 121–146 (VRVTDSPSSGDDEDDDDESEDTGVPF) is disordered. Acidic residues predominate over residues 130-141 (GDDEDDDDESED). Ig-like C2-type domains follow at residues 150–238 (PDKM…YQLD) and 247–349 (PILQ…AWLT). Cys170 and Cys222 form a disulfide bridge. N-linked (GlcNAc...) asparagine glycosylation is found at Asn219, Asn256, Asn288, Asn309, and Asn322. A disulfide bridge connects residues Cys269 and Cys333. Residues 365 to 389 (VYAGILSYGTGLVLFILVLVIVIIC) traverse the membrane as a helical segment. Residues 390–806 (RMKMPNKKAM…HVPCNGVIRT (417 aa)) lie on the Cytoplasmic side of the membrane. The 290-residue stretch at 466–755 (LTLGKPLGEG…LTMTSTDEYL (290 aa)) folds into the Protein kinase domain. Residues 472–480 (LGEGCFGQV) and Lys502 contribute to the ATP site. Asp611 serves as the catalytic Proton acceptor. 4 positions are modified to phosphotyrosine; by autocatalysis: Tyr641, Tyr642, Tyr718, and Tyr754.

The protein belongs to the protein kinase superfamily. Tyr protein kinase family. Fibroblast growth factor receptor subfamily. In terms of assembly, monomer. Homodimer after ligand binding. In terms of processing, autophosphorylated. Binding of FGF family members together with heparan sulfate proteoglycan or heparin promotes receptor dimerization and autophosphorylation on tyrosine residues. Autophosphorylation occurs in trans between the two FGFR molecules present in the dimer.

The protein localises to the cell membrane. It carries out the reaction L-tyrosyl-[protein] + ATP = O-phospho-L-tyrosyl-[protein] + ADP + H(+). With respect to regulation, present in an inactive conformation in the absence of bound ligand. Ligand binding leads to dimerization and activation by autophosphorylation on tyrosine residues. Functionally, tyrosine-protein kinase that acts as a cell-surface receptor for fibroblast growth factors and plays an essential role in the regulation of cell proliferation, differentiation and apoptosis. Plays an essential role in the regulation of chondrocyte differentiation, proliferation and apoptosis, and is required for normal skeleton development. Regulates both osteogenesis and postnatal bone mineralization by osteoblasts. Promotes apoptosis in chondrocytes, but can also promote cancer cell proliferation. Phosphorylates PLCG1, CBL and FRS2. Ligand binding leads to the activation of several signaling cascades. Activation of PLCG1 leads to the production of the cellular signaling molecules diacylglycerol and inositol 1,4,5-trisphosphate. Phosphorylation of FRS2 triggers recruitment of GRB2, GAB1, PIK3R1 and SOS1, and mediates activation of RAS, MAPK1/ERK2, MAPK3/ERK1 and the MAP kinase signaling pathway, as well as of the AKT1 signaling pathway. This is Fibroblast growth factor receptor 3 (FGFR3) from Gallus gallus (Chicken).